The following is a 235-amino-acid chain: Ribonuclease PH (235 aa).

Residues arginine 86 and 124 to 126 (GTR) contribute to the phosphate site.

The protein belongs to the RNase PH family. Homohexameric ring arranged as a trimer of dimers.

The catalysed reaction is tRNA(n+1) + phosphate = tRNA(n) + a ribonucleoside 5'-diphosphate. Its function is as follows. Phosphorolytic 3'-5' exoribonuclease that plays an important role in tRNA 3'-end maturation. Removes nucleotide residues following the 3'-CCA terminus of tRNAs; can also add nucleotides to the ends of RNA molecules by using nucleoside diphosphates as substrates, but this may not be physiologically important. Probably plays a role in initiation of 16S rRNA degradation (leading to ribosome degradation) during starvation. The chain is Ribonuclease PH from Legionella pneumophila (strain Corby).